The primary structure comprises 570 residues: Urease subunit alpha (570 aa).

The 439-residue stretch at 132–570 folds into the Urease domain; the sequence is GGIDTHVHFI…LPMAQRYFLF (439 aa). The Ni(2+) site is built by His-137 and His-139. Positions 139 and 170 each coordinate substrate. A Ni(2+)-binding site is contributed by Lys-220. An N6-carboxylysine modification is found at Lys-220. Residues His-222 and His-249 each coordinate substrate. The Ni(2+) site is built by His-249 and His-275. His-323 (proton donor) is an active-site residue. Asp-363 lines the Ni(2+) pocket. Ala-366 is a substrate binding site.

This sequence belongs to the metallo-dependent hydrolases superfamily. Urease alpha subunit family. In terms of assembly, heterotrimer of UreA (gamma), UreB (beta) and UreC (alpha) subunits. Three heterotrimers associate to form the active enzyme. It depends on Ni cation as a cofactor. Post-translationally, carboxylation allows a single lysine to coordinate two nickel ions.

The protein localises to the cytoplasm. The enzyme catalyses urea + 2 H2O + H(+) = hydrogencarbonate + 2 NH4(+). The protein operates within nitrogen metabolism; urea degradation; CO(2) and NH(3) from urea (urease route): step 1/1. Its activity is regulated as follows. Inhibited by fluoride. In Sporosarcina pasteurii (Bacillus pasteurii), this protein is Urease subunit alpha.